A 156-amino-acid chain; its full sequence is Dynein 16 kDa light chain, flagellar outer arm (156 aa).

The Thioredoxin domain maps to 2–116; it reads AAGLPPVQYS…LNQQVLSLTP (115 aa). An intrachain disulfide couples C37 to C40.

As to quaternary structure, consists of at least 3 heavy chains (alpha, beta and gamma), 2 intermediate chains and 8 light chains.

Its subcellular location is the cell projection. The protein resides in the cilium. It is found in the flagellum. The protein localises to the cytoplasm. It localises to the cytoskeleton. Its subcellular location is the flagellum axoneme. Its function is as follows. May be involved in regulating the redox state of functionally important thiol groups within dynein. The chain is Dynein 16 kDa light chain, flagellar outer arm from Chlamydomonas reinhardtii (Chlamydomonas smithii).